The sequence spans 405 residues: Patatin-like protein 2 (405 aa).

A PNPLA domain is found at 24-230 (LSIDGGGVRG…AANNPTLCAM (207 aa)). Positions 28-33 (GGGVRG) match the GXGXXG motif. Residues 66–70 (GTSTG) carry the GXSXG motif. The active-site Nucleophile is the serine 68. The Proton acceptor role is filled by aspartate 217. The DGA/G motif lies at 217-219 (DGG).

It belongs to the patatin family.

Functionally, possesses non-specific lipolytic acyl hydrolase (LAH) activity. Hydrolyzes phospholipids as well as galactolipids. May play a role in disease resistance. This is Patatin-like protein 2 (PLP2) from Oryza sativa subsp. indica (Rice).